The primary structure comprises 891 residues: DNA polymerase I (891 aa).

A 5'-3' exonuclease domain is found at 1–313; sequence MEQPVIKEGT…LLDNTPALDN (313 aa). The 3'-5' exonuclease domain maps to 314-488; that stretch reads TPKKSCMIVL…RLCEYFEKGG (175 aa). Residues 492–890 are polymerase; it reads NLLSLAREIE…FIAKRWNELK (399 aa).

This sequence belongs to the DNA polymerase type-A family. Single-chain monomer with multiple functions.

It carries out the reaction DNA(n) + a 2'-deoxyribonucleoside 5'-triphosphate = DNA(n+1) + diphosphate. In addition to polymerase activity, this DNA polymerase exhibits 3'-5' and 5'-3' exonuclease activity. The chain is DNA polymerase I (polA) from Helicobacter pylori (strain ATCC 700392 / 26695) (Campylobacter pylori).